The following is an 855-amino-acid chain: Protein translocase subunit SecA (855 aa).

Residues Gln-85, 103 to 107 (GEGKT), and Asp-492 each bind ATP. Positions 794 to 845 (AAIHEESSSAAAPGPGQNQPGGPGGPSAGPVAPVRNLDKHGRNELCPCGSGK) are disordered. Residues 801 to 811 (SSAAAPGPGQN) are compositionally biased toward low complexity. The Zn(2+) site is built by Cys-839, Cys-841, Cys-850, and Cys-851.

Belongs to the SecA family. In terms of assembly, monomer and homodimer. Part of the essential Sec protein translocation apparatus which comprises SecA, SecYEG and auxiliary proteins SecDF. Other proteins may also be involved. Zn(2+) is required as a cofactor.

It localises to the cell membrane. It is found in the cytoplasm. The catalysed reaction is ATP + H2O + cellular proteinSide 1 = ADP + phosphate + cellular proteinSide 2.. In terms of biological role, part of the Sec protein translocase complex. Interacts with the SecYEG preprotein conducting channel. Has a central role in coupling the hydrolysis of ATP to the transfer of proteins into and across the cell membrane, serving as an ATP-driven molecular motor driving the stepwise translocation of polypeptide chains across the membrane. The chain is Protein translocase subunit SecA from Clostridium beijerinckii (strain ATCC 51743 / NCIMB 8052) (Clostridium acetobutylicum).